A 421-amino-acid polypeptide reads, in one-letter code: D-amino acid dehydrogenase (421 aa).

FAD is bound at residue 3-17 (VIVLGSGVIGVASAY).

It belongs to the DadA oxidoreductase family. FAD is required as a cofactor.

The catalysed reaction is a D-alpha-amino acid + A + H2O = a 2-oxocarboxylate + AH2 + NH4(+). It functions in the pathway amino-acid degradation; D-alanine degradation; NH(3) and pyruvate from D-alanine: step 1/1. Its function is as follows. Oxidative deamination of D-amino acids. In Acinetobacter baumannii (strain SDF), this protein is D-amino acid dehydrogenase.